A 153-amino-acid chain; its full sequence is Troponin C (153 aa).

A1 bears the Blocked amino end (Ala) mark. EF-hand domains lie at 10–45, 46–81, 86–121, and 122–153; these read EQVQ…LGQT, FEEK…FLVE, AMQE…LDDK, and LTED…MMTG. The Ca(2+) site is built by D59, D61, S63, E65, E70, D99, D110, D135, D137, S139, T141, and E146.

It belongs to the troponin C family.

Troponin is the central regulatory protein of striated muscle contraction. Tn consists of three components: Tn-I which is the inhibitor of actomyosin ATPase, Tn-T which contains the binding site for tropomyosin and Tn-C. The binding of calcium to Tn-C abolishes the inhibitory action of Tn on actin filaments. This Tachypleus tridentatus (Japanese horseshoe crab) protein is Troponin C.